Here is a 176-residue protein sequence, read N- to C-terminus: Large ribosomal subunit protein uL10 (176 aa).

The protein belongs to the universal ribosomal protein uL10 family. In terms of assembly, part of the ribosomal stalk of the 50S ribosomal subunit. The N-terminus interacts with L11 and the large rRNA to form the base of the stalk. The C-terminus forms an elongated spine to which L12 dimers bind in a sequential fashion forming a multimeric L10(L12)X complex.

In terms of biological role, forms part of the ribosomal stalk, playing a central role in the interaction of the ribosome with GTP-bound translation factors. The polypeptide is Large ribosomal subunit protein uL10 (Saccharophagus degradans (strain 2-40 / ATCC 43961 / DSM 17024)).